The following is a 408-amino-acid chain: Arginine deiminase (408 aa).

Cys-397 acts as the Amidino-cysteine intermediate in catalysis.

It belongs to the arginine deiminase family.

It localises to the cytoplasm. It catalyses the reaction L-arginine + H2O = L-citrulline + NH4(+). The protein operates within amino-acid degradation; L-arginine degradation via ADI pathway; carbamoyl phosphate from L-arginine: step 1/2. This Listeria innocua serovar 6a (strain ATCC BAA-680 / CLIP 11262) protein is Arginine deiminase.